Reading from the N-terminus, the 256-residue chain is Hydroxyacylglutathione hydrolase (256 aa).

His-57, His-59, Asp-61, His-62, His-115, Asp-134, and His-172 together coordinate Zn(2+).

The protein belongs to the metallo-beta-lactamase superfamily. Glyoxalase II family. As to quaternary structure, monomer. Requires Zn(2+) as cofactor.

It carries out the reaction an S-(2-hydroxyacyl)glutathione + H2O = a 2-hydroxy carboxylate + glutathione + H(+). It participates in secondary metabolite metabolism; methylglyoxal degradation; (R)-lactate from methylglyoxal: step 2/2. Functionally, thiolesterase that catalyzes the hydrolysis of S-D-lactoyl-glutathione to form glutathione and D-lactic acid. The sequence is that of Hydroxyacylglutathione hydrolase from Rhodospirillum rubrum (strain ATCC 11170 / ATH 1.1.1 / DSM 467 / LMG 4362 / NCIMB 8255 / S1).